We begin with the raw amino-acid sequence, 172 residues long: Histone H1-like protein HC2 (172 aa).

Positions 1–77 (MIGAQKKQSG…TVAKKPAVKK (77 aa)) are disordered. Positions 8–77 (QSGKKTASRA…TVAKKPAVKK (70 aa)) are enriched in basic residues.

This sequence belongs to the histone H1/H5 family. HCT subfamily.

Functionally, might have a role in establishing the nucleoid structure of elementary bodies. In Chlamydia pneumoniae (Chlamydophila pneumoniae), this protein is Histone H1-like protein HC2 (hctB).